A 105-amino-acid polypeptide reads, in one-letter code: MPVVKINAIEVPAGAGPELEKRFAHRAHAVENSPGFLGFQLLRPVKGEERYFVVTHWESDEAFQAWANGPAIAAHAGHRANPVATGASLLEFEVVLDVGGTGKTA.

Residues 3 to 92 (VVKINAIEVP…VATGASLLEF (90 aa)) enclose the ABM domain. Residues 22–26 (RFAHR), His-75, and 83–86 (VATG) each bind heme.

The protein belongs to the antibiotic biosynthesis monooxygenase family. In terms of assembly, homodimer.

It catalyses the reaction heme b + 3 AH2 + 3 O2 + 2 H(+) = mycobilin a + Fe(2+) + 3 A + 3 H2O. The catalysed reaction is heme b + 3 AH2 + 3 O2 + 2 H(+) = mycobilin b + Fe(2+) + 3 A + 3 H2O. Its function is as follows. Catalyzes the oxidative degradation of the heme macrocyclic porphyrin ring in the presence of a suitable electron donor such as ascorbate or NADPH--cytochrome P450 reductase, with subsequent release of free iron. The polypeptide is Heme oxygenase (mycobilin-producing) (mhuD) (Mycobacterium tuberculosis (strain CDC 1551 / Oshkosh)).